The sequence spans 734 residues: Photosystem I P700 chlorophyll a apoprotein A2 (734 aa).

Transmembrane regions (helical) follow at residues 46-69 (IFAS…FHVA), 135-158 (LYSG…LHLQ), 175-199 (LNHH…HVAI), 273-291 (IAHH…GHMY), 330-353 (LHFQ…QHMY), 369-395 (AALY…IFFV), 417-439 (AIIS…LYVH), and 517-535 (FLVH…LILV). C559 and C568 together coordinate [4Fe-4S] cluster. Helical transmembrane passes span 575-596 (AFYL…YWHW) and 643-665 (LSVW…MFLI). Chlorophyll a contacts are provided by H654, M662, and Y670. W671 is a phylloquinone binding site. The chain crosses the membrane as a helical span at residues 707–727 (LVGLVHFTVGYIFTYAAFVIA).

Belongs to the PsaA/PsaB family. The PsaA/B heterodimer binds the P700 chlorophyll special pair and subsequent electron acceptors. PSI consists of a core antenna complex that captures photons, and an electron transfer chain that converts photonic excitation into a charge separation. The eukaryotic PSI reaction center is composed of at least 11 subunits. The cofactor is P700 is a chlorophyll a/chlorophyll a' dimer, A0 is one or more chlorophyll a, A1 is one or both phylloquinones and FX is a shared 4Fe-4S iron-sulfur center..

The protein localises to the plastid. It is found in the chloroplast thylakoid membrane. It catalyses the reaction reduced [plastocyanin] + hnu + oxidized [2Fe-2S]-[ferredoxin] = oxidized [plastocyanin] + reduced [2Fe-2S]-[ferredoxin]. Functionally, psaA and PsaB bind P700, the primary electron donor of photosystem I (PSI), as well as the electron acceptors A0, A1 and FX. PSI is a plastocyanin/cytochrome c6-ferredoxin oxidoreductase, converting photonic excitation into a charge separation, which transfers an electron from the donor P700 chlorophyll pair to the spectroscopically characterized acceptors A0, A1, FX, FA and FB in turn. Oxidized P700 is reduced on the lumenal side of the thylakoid membrane by plastocyanin or cytochrome c6. The sequence is that of Photosystem I P700 chlorophyll a apoprotein A2 from Guillardia theta (Cryptophyte).